The sequence spans 97 residues: uncharacterized protein (97 aa).

3 helical membrane-spanning segments follow: residues Cys-7–Gly-27, Ile-34–Ser-54, and Ile-69–Leu-89.

Its subcellular location is the cell membrane. This is an uncharacterized protein from Haemophilus influenzae (strain ATCC 51907 / DSM 11121 / KW20 / Rd).